We begin with the raw amino-acid sequence, 132 residues long: Fatty acid-binding protein, adipocyte (132 aa).

Residue C2 is modified to N-acetylcysteine. S13 is modified (phosphoserine). Y20 carries the phosphotyrosine; by Tyr-kinases modification. Positions 22–32 (KEVGVGFATRK) match the Nuclear localization signal motif. 127–129 (RVY) lines the a fatty acid pocket.

It belongs to the calycin superfamily. Fatty-acid binding protein (FABP) family. Monomer. Homodimer. Interacts with PPARG.

The protein resides in the cytoplasm. It is found in the nucleus. Functionally, lipid transport protein in adipocytes. Binds both long chain fatty acids and retinoic acid. Delivers long-chain fatty acids and retinoic acid to their cognate receptors in the nucleus. FABPs are important elements related to the hibernating state in mammals. This chain is Fatty acid-binding protein, adipocyte (FABP4), found in Ictidomys tridecemlineatus (Thirteen-lined ground squirrel).